Reading from the N-terminus, the 126-residue chain is Holo-[acyl-carrier-protein] synthase (126 aa).

Residues Asp-6 and Glu-55 each contribute to the Mg(2+) site.

This sequence belongs to the P-Pant transferase superfamily. AcpS family. Mg(2+) is required as a cofactor.

The protein localises to the cytoplasm. The catalysed reaction is apo-[ACP] + CoA = holo-[ACP] + adenosine 3',5'-bisphosphate + H(+). Its function is as follows. Transfers the 4'-phosphopantetheine moiety from coenzyme A to a Ser of acyl-carrier-protein. The chain is Holo-[acyl-carrier-protein] synthase from Chlorobium limicola (strain DSM 245 / NBRC 103803 / 6330).